Consider the following 203-residue polypeptide: MSRYTGPSWKQARRLGLSLTGTGKELARRNYVPGQHGPNNRSKLSEYGLQLAEKQKLRFTYGVGEKQFRNLFVQASKIKEGILGFNFMLLLERRLDNVVYRLGLATTRRQARQFVNHGHILVDGKRVDIPSYRVTPGQVISVREKSLKVPAILEAVEATLGRPAFVSFDAEKLEGSLTRLPERDEINPEINEALIVEFYNKML.

Positions 93–156 constitute an S4 RNA-binding domain; that stretch reads RRLDNVVYRL…LKVPAILEAV (64 aa).

The protein belongs to the universal ribosomal protein uS4 family. Part of the 30S ribosomal subunit. Contacts protein S5. The interaction surface between S4 and S5 is involved in control of translational fidelity.

Functionally, one of the primary rRNA binding proteins, it binds directly to 16S rRNA where it nucleates assembly of the body of the 30S subunit. Its function is as follows. With S5 and S12 plays an important role in translational accuracy. The sequence is that of Small ribosomal subunit protein uS4 from Streptococcus sanguinis (strain SK36).